Here is a 370-residue protein sequence, read N- to C-terminus: Probable G-protein coupled receptor 85 (370 aa).

Residues 1 to 25 (MANYSHAADNILQNLSPLTAFLKLT) are Extracellular-facing. A glycan (N-linked (GlcNAc...) asparagine) is linked at Asn3. Residues 26 to 46 (SLGFIIGVSVVGNLLISILLV) traverse the membrane as a helical segment. The Cytoplasmic segment spans residues 47 to 57 (KDKTLHRAPYY). The chain crosses the membrane as a helical span at residues 58–78 (FLLDLCCSDILRSAICFPFVF). The Extracellular segment spans residues 79–96 (NSVKNGSTWTYGTLTCKV). Asn83 is a glycosylation site (N-linked (GlcNAc...) asparagine). Cys94 and Cys172 form a disulfide bridge. A helical membrane pass occupies residues 97-117 (IAFLGVLSCFHTAFMLFCISV). At 118-137 (TRYLAIAHHRFYTKRLTFWT) the chain is on the cytoplasmic side. A helical membrane pass occupies residues 138–158 (CLAVICMVWTLSVAMAFPPVL). The Extracellular portion of the chain corresponds to 159 to 188 (DVGTYSFIREEDQCTFQHRSFRANDSLGFM). Residue Asn182 is glycosylated (N-linked (GlcNAc...) asparagine). The chain crosses the membrane as a helical span at residues 189–209 (LLLALILLATQLVYLKLIFFV). Over 210–286 (HDRRKMKPVQ…FKMEKRISRM (77 aa)) the chain is Cytoplasmic. A helical transmembrane segment spans residues 287–307 (FYIMTFLFLTLWGPYLVACYW). The Extracellular portion of the chain corresponds to 308–313 (RVFARG). Residues 314–334 (PVVPGGFLTAAVWMSFAQAGI) form a helical membrane-spanning segment. Residues 335–370 (NPFVCIFSNRELRRCFSTTLLYCRKSRLPREPYCVI) are Cytoplasmic-facing.

Belongs to the G-protein coupled receptor 1 family. In terms of assembly, interacts with DLG4 and DLG3. Highly expressed in brain and testis. Lower levels in small intestine, placenta and spleen. In brain regions, detected in all regions tested, but somewhat lower levels in the corpus callosum, medulla and spinal cord.

The protein resides in the cell membrane. The protein localises to the endoplasmic reticulum. In terms of biological role, orphan receptor. The chain is Probable G-protein coupled receptor 85 (GPR85) from Homo sapiens (Human).